The following is a 392-amino-acid chain: MATAAQGPLSLLWGWLWSERFWLPENVSWADLEGPADGYGYPRGRHILSVFPLAAGIFFVRLLFERFIAKPCALCIGIEDSGPYQAQPNAILEKVFISITKYPDKKRLEGLSKQLDWNVRKIQCWFRHRRNQDKPPTLTKFCESMWRFTFYLCIFCYGIRFLWSSPWFWDIRQCWHNYPFQPLSSGLYHYYIMELAFYWSLMFSQFTDIKRKDFLIMFVHHLVTIGLISFSYINNMVRVGTLIMCLHDVSDFLLEAAKLANYAKYQRLCDTLFVIFSAVFMVTRLGIYPFWILNTTLFESWEIIGPYASWWLLNGLLLTLQLLHVIWSYLIARIALKALIRGKVSKDDRSDVESSSEEEDVTTCTKSPCDSSSSNGANRVNGHMGGSYWAEE.

The Lumenal segment spans residues 1-46 (MATAAQGPLSLLWGWLWSERFWLPENVSWADLEGPADGYGYPRGRH). N-linked (GlcNAc...) asparagine glycosylation is present at asparagine 26. Residues 47 to 67 (ILSVFPLAAGIFFVRLLFERF) traverse the membrane as a helical segment. Residues 75–136 (CIGIEDSGPY…RHRRNQDKPP (62 aa)) form a homeobox-like region. Residues 139–340 (TKFCESMWRF…IARIALKALI (202 aa)) enclose the TLC domain. Helical transmembrane passes span 148–168 (FTFYLCIFCYGIRFLWSSPWF), 183–203 (LSSGLYHYYIMELAFYWSLMF), 214–234 (FLIMFVHHLVTIGLISFSYIN), and 272–292 (LFVIFSAVFMVTRLGIYPFWI). The Last loop motif signature appears at 299 to 309 (ESWEIIGPYAS). A helical membrane pass occupies residues 311–331 (WLLNGLLLTLQLLHVIWSYLI). At 332–392 (ARIALKALIR…HMGGSYWAEE (61 aa)) the chain is on the cytoplasmic side. Positions 349–392 (RSDVESSSEEEDVTTCTKSPCDSSSSNGANRVNGHMGGSYWAEE) are disordered. The span at 362-378 (TTCTKSPCDSSSSNGAN) shows a compositional bias: polar residues.

As to quaternary structure, interacts with PAQR4; the interaction regulates the stability and activity of CERS5 and is inhibited in presence of ceramides. In terms of processing, phosphorylated at the C-terminus by CK2.

Its subcellular location is the endoplasmic reticulum membrane. It catalyses the reaction a sphingoid base + hexadecanoyl-CoA = an N-hexadecanoyl-sphingoid base + CoA + H(+). The enzyme catalyses sphinganine + hexadecanoyl-CoA = N-hexadecanoylsphinganine + CoA + H(+). The catalysed reaction is hexadecasphinganine + hexadecanoyl-CoA = N-hexadecanoylhexadecasphinganine + CoA + H(+). It carries out the reaction sphing-4-enine + hexadecanoyl-CoA = N-hexadecanoylsphing-4-enine + CoA + H(+). It catalyses the reaction 2-hydroxyhexadecanoyl-CoA + sphinganine = N-(2-hydroxyhexadecanoyl)-sphinganine + CoA + H(+). The enzyme catalyses sphinganine + tetradecanoyl-CoA = N-(tetradecanoyl)-sphinganine + CoA + H(+). The catalysed reaction is sphinganine + octadecanoyl-CoA = N-(octadecanoyl)-sphinganine + CoA + H(+). It carries out the reaction sphinganine + (9Z)-octadecenoyl-CoA = N-(9Z-octadecenoyl)-sphinganine + CoA + H(+). It catalyses the reaction a fatty acyl-CoA + sphing-4-enine = an N-acylsphing-4-enine + CoA + H(+). Its pathway is lipid metabolism; sphingolipid metabolism. With respect to regulation, inhibited by fumonisin B1. Functionally, ceramide synthase that catalyzes the transfer of the acyl chain from acyl-CoA to a sphingoid base, with high selectivity toward palmitoyl-CoA (hexadecanoyl-CoA; C16:0-CoA). Can use other acyl donors, but with less efficiency. N-acylates sphinganine and sphingosine bases to form dihydroceramides and ceramides in de novo synthesis and salvage pathways, respectively. Plays a role in de novo ceramide synthesis and surfactant homeostasis in pulmonary epithelia. This is Ceramide synthase 5 from Homo sapiens (Human).